Consider the following 262-residue polypeptide: Capsid protein (262 aa).

Residues 183–262 form a disordered region; it reads APTIEAITRP…SHHRSPSPRK (80 aa). The Bipartite nuclear localization signal signature appears at 215-233; the sequence is RRRKVKTTVVYGRRRSKSR. Residues 215–234 show a composition bias toward basic residues; the sequence is RRRKVKTTVVYGRRRSKSRE. A phosphoserine; by host mark is found at S232, S239, and S245. Residues 252–262 show a composition bias toward basic residues; it reads SSHHRSPSPRK. Positions 254-260 are RNA binding; sequence HHRSPSP.

Belongs to the avihepadnavirus core antigen family. In terms of assembly, homodimerizes, then multimerizes.

The protein resides in the virion. It is found in the host cytoplasm. Self assembles to form an icosahedral capsid. Most capsid appear to be large particles with an icosahedral symmetry of T=4 and consist of 240 copies of capsid protein, though a fraction forms smaller T=3 particles consisting of 180 capsid proteins. Entering capsid are transported along microtubules to the nucleus. Phosphorylation of the capsid is thought to induce exposure of nuclear localization signal in the C-terminal portion of the capsid protein that allows binding to the nuclear pore complex via the importin (karyopherin-) alpha and beta. Capsids are imported in intact form through the nuclear pore into the nuclear basket, where it probably binds NUP153. Only capsids that contain the mature viral genome can release the viral DNA and capsid protein into the nucleoplasm. Immature capsids get stucked in the basket. Capsids encapsulate the pre-genomic RNA and the P protein. Pre-genomic RNA is reverse transcribed into DNA while the capsid is still in the cytoplasm. The capsid can then either be directed to the nucleus, providing more genome for transcription, or bud through the endoplasmic reticulum to provide new virions. This chain is Capsid protein (C), found in Duck hepatitis B virus (strain China) (DHBV).